The primary structure comprises 445 residues: Rab GDP dissociation inhibitor beta (445 aa).

The residue at position 1 (methionine 1) is an N-acetylmethionine. Residue lysine 57 is modified to N6-succinyllysine. At lysine 112 the chain carries N6-acetyllysine. At serine 130 the chain carries Phosphoserine. Lysine 269 is modified (N6-acetyllysine). Serine 382 carries the post-translational modification Phosphoserine.

Belongs to the Rab GDI family. As to quaternary structure, interacts with RHOH. Interacts with the GDP-bound inactive forms of RAB3A, RAB3B, RAB3C, RAB5A, RAB5B, RAB5C, RAB8A, RAB8B, RAB10, RAB12, RAB35, and RAB43; binds RAB3D to a lesser extent. Interacts with DZIP1; this interaction negatively regulates the interaction of GDI2 with GDP-bound RAB8A. Ubiquitously expressed.

Its subcellular location is the cytoplasm. The protein resides in the membrane. The protein localises to the golgi apparatus. It localises to the trans-Golgi network. In terms of biological role, GDP-dissociation inhibitor preventing the GDP to GTP exchange of most Rab proteins. By keeping these small GTPases in their inactive GDP-bound form regulates intracellular membrane trafficking. Negatively regulates protein transport to the cilium and ciliogenesis through the inhibition of RAB8A. This chain is Rab GDP dissociation inhibitor beta (GDI2), found in Bos taurus (Bovine).